We begin with the raw amino-acid sequence, 166 residues long: Lipoprotein signal peptidase (166 aa).

A run of 3 helical transmembrane segments spans residues 12 to 32 (WLWVVVAVLIIDLGSKFLILQ), 70 to 90 (WFFSGIAIGICVVLTVLMYRS), and 102 to 122 (ALIIGGALGNLFDRLWHGFVV). Residues Asp123 and Asp141 contribute to the active site. A helical membrane pass occupies residues 137 to 157 (FNLADSAICIGAALIVLEGFL).

This sequence belongs to the peptidase A8 family.

It localises to the cell inner membrane. It catalyses the reaction Release of signal peptides from bacterial membrane prolipoproteins. Hydrolyzes -Xaa-Yaa-Zaa-|-(S,diacylglyceryl)Cys-, in which Xaa is hydrophobic (preferably Leu), and Yaa (Ala or Ser) and Zaa (Gly or Ala) have small, neutral side chains.. The protein operates within protein modification; lipoprotein biosynthesis (signal peptide cleavage). This protein specifically catalyzes the removal of signal peptides from prolipoproteins. This chain is Lipoprotein signal peptidase, found in Klebsiella pneumoniae (strain 342).